Reading from the N-terminus, the 337-residue chain is Eukaryotic translation initiation factor 3 subunit H (337 aa).

Positions 25–158 (VQIEGLAVLK…LKALKLSDSF (134 aa)) constitute an MPN domain. Serine 178 bears the Phosphoserine; by ATPK1 mark. A compositionally biased stretch (basic and acidic residues) spans 267–278 (RRTENMARKSAG). The disordered stretch occupies residues 267-290 (RRTENMARKSAGEEPLPEEDPSNP).

Belongs to the eIF-3 subunit H family. As to quaternary structure, component of the eukaryotic translation initiation factor 3 (eIF-3) complex. Interacts directly with TIF3A1, TIF3B1, TIF3C1, TIF3E1 and TIF3F1. Associates with the CSN (COP9 signalosome) complex. Binds to CSN1, CSN7 and CSN8. Interacts with ATPK1. In terms of processing, in response to auxin (NAA), phosphorylated at Ser-178 by ATPK1 and binds to polysomes via TOR signaling. This phosphorylation is repressed by Torin-1. Mostly expressed in roots and flowers, and, to a lower extent, in leaves, stems and siliques.

It is found in the cytoplasm. In terms of biological role, component of the eukaryotic translation initiation factor 3 (eIF-3) complex, which is involved in protein synthesis of a specialized repertoire of mRNAs and, together with other initiation factors, stimulates binding of mRNA and methionyl-tRNAi to the 40S ribosome. The eIF-3 complex specifically targets and initiates translation of a subset of mRNAs involved in cell proliferation (Potential). Regulates translation initiation of specific 5' mRNAs harboring multiple upstream open reading frames (uORFs) in their 5' leader sequence (e.g. BETA-OHASE 2 and LHY). This is Eukaryotic translation initiation factor 3 subunit H (TIF3H1) from Arabidopsis thaliana (Mouse-ear cress).